Here is a 278-residue protein sequence, read N- to C-terminus: Large ribosomal subunit protein uL2 (278 aa).

The disordered stretch occupies residues 218-278 (RPHNRGVVMN…IMRSRHQRKK (61 aa)).

The protein belongs to the universal ribosomal protein uL2 family. Part of the 50S ribosomal subunit. Forms a bridge to the 30S subunit in the 70S ribosome.

Its function is as follows. One of the primary rRNA binding proteins. Required for association of the 30S and 50S subunits to form the 70S ribosome, for tRNA binding and peptide bond formation. It has been suggested to have peptidyltransferase activity; this is somewhat controversial. Makes several contacts with the 16S rRNA in the 70S ribosome. The sequence is that of Large ribosomal subunit protein uL2 from Rhizobium etli (strain CIAT 652).